The following is a 147-amino-acid chain: Protein-export protein SecB (147 aa).

Belongs to the SecB family. As to quaternary structure, homotetramer, a dimer of dimers. One homotetramer interacts with 1 SecA dimer.

The protein resides in the cytoplasm. Its function is as follows. One of the proteins required for the normal export of preproteins out of the cell cytoplasm. It is a molecular chaperone that binds to a subset of precursor proteins, maintaining them in a translocation-competent state. It also specifically binds to its receptor SecA. The sequence is that of Protein-export protein SecB from Neisseria gonorrhoeae (strain ATCC 700825 / FA 1090).